The chain runs to 747 residues: Fatty acid oxidation complex subunit alpha (747 aa).

The tract at residues Met-1–Pro-197 is enoyl-CoA hydratase. The 3-hydroxyacyl-CoA dehydrogenase stretch occupies residues Arg-313–Ser-747. A disordered region spans residues Tyr-590–Phe-614. A compositionally biased stretch (polar residues) spans Ser-593–Lys-610.

In the N-terminal section; belongs to the enoyl-CoA hydratase/isomerase family. This sequence in the central section; belongs to the 3-hydroxyacyl-CoA dehydrogenase family. In terms of assembly, heterotetramer of two alpha chains (FadJ) and two beta chains (FadI).

It localises to the cytoplasm. It carries out the reaction a (3S)-3-hydroxyacyl-CoA = a (2E)-enoyl-CoA + H2O. The catalysed reaction is a 4-saturated-(3S)-3-hydroxyacyl-CoA = a (3E)-enoyl-CoA + H2O. It catalyses the reaction a (3S)-3-hydroxyacyl-CoA + NAD(+) = a 3-oxoacyl-CoA + NADH + H(+). The enzyme catalyses (3S)-3-hydroxybutanoyl-CoA = (3R)-3-hydroxybutanoyl-CoA. The protein operates within lipid metabolism; fatty acid beta-oxidation. In terms of biological role, catalyzes the formation of a hydroxyacyl-CoA by addition of water on enoyl-CoA. Also exhibits 3-hydroxyacyl-CoA epimerase and 3-hydroxyacyl-CoA dehydrogenase activities. This chain is Fatty acid oxidation complex subunit alpha, found in Yersinia pseudotuberculosis serotype O:1b (strain IP 31758).